The sequence spans 119 residues: Ribonuclease (119 aa).

Residues Lys-6 and Arg-9 each contribute to the substrate site. Residue His-11 is the Proton acceptor of the active site. Disulfide bonds link Cys-26–Cys-81, Cys-40–Cys-92, and Cys-58–Cys-107. Substrate contacts are provided by residues 41–45 and Arg-82; that span reads KFTNT. His-114 serves as the catalytic Proton donor.

It belongs to the pancreatic ribonuclease family. In terms of assembly, monomer. Interacts with and forms tight 1:1 complexes with RNH1. Dimerization of two such complexes may occur. Interaction with RNH1 inhibits this protein. In terms of tissue distribution, pancreas.

Its subcellular location is the secreted. It catalyses the reaction an [RNA] containing cytidine + H2O = an [RNA]-3'-cytidine-3'-phosphate + a 5'-hydroxy-ribonucleotide-3'-[RNA].. The catalysed reaction is an [RNA] containing uridine + H2O = an [RNA]-3'-uridine-3'-phosphate + a 5'-hydroxy-ribonucleotide-3'-[RNA].. Endonuclease that catalyzes the cleavage of RNA on the 3' side of pyrimidine nucleotides. Acts on single-stranded and double-stranded RNA. This chain is Ribonuclease, found in Chelydra serpentina (Snapping turtle).